A 217-amino-acid chain; its full sequence is Ribonuclease HII (217 aa).

Residues Asp-12 to Ala-201 enclose the RNase H type-2 domain. 3 residues coordinate a divalent metal cation: Asp-18, Glu-19, and Asp-110.

The protein belongs to the RNase HII family. Mn(2+) is required as a cofactor. The cofactor is Mg(2+).

It is found in the cytoplasm. It catalyses the reaction Endonucleolytic cleavage to 5'-phosphomonoester.. Its function is as follows. Endonuclease that specifically degrades the RNA of RNA-DNA hybrids. The protein is Ribonuclease HII of Pseudomonas syringae pv. tomato (strain ATCC BAA-871 / DC3000).